Reading from the N-terminus, the 518-residue chain is Histone deacetylase 1 (518 aa).

The interval 22–333 (RRVCYFYDAE…WCYETGVALG (312 aa)) is histone deacetylase. H153 (proton donor/acceptor) is an active-site residue. Residues D188, H190, and D276 each contribute to the Zn(2+) site. The tract at residues 387 to 518 (HAPSVQFQER…QDQPSVHQKT (132 aa)) is disordered. Residues 401–412 (ELPEQDEDQEDP) show a composition bias toward acidic residues. Residues 413 to 435 (DERHHADSDVEMDDVKPLDDSGR) are compositionally biased toward basic and acidic residues. The segment covering 503-518 (DNSNKLQDQPSVHQKT) has biased composition (polar residues).

This sequence belongs to the histone deacetylase family. HD Type 1 subfamily. Interacts with TPR3. It depends on Zn(2+) as a cofactor. In terms of tissue distribution, expressed in roots and leaves.

The protein localises to the nucleus. The catalysed reaction is N(6)-acetyl-L-lysyl-[histone] + H2O = L-lysyl-[histone] + acetate. Responsible for the deacetylation of lysine residues on the N-terminal part of the core histones (H2A, H2B, H3 and H4). Histone deacetylation gives a tag for epigenetic repression and plays an important role in transcriptional regulation, cell cycle progression and developmental events. Histone deacetylases act via the formation of large multiprotein complexes. Negatively regulates the expression of the NAC48/NAC6 gene that controls root growth in seedlings. Epigenetically represses the expression of NAC48/NAC6 by deacetylating 'Lys-9' (H3K9ac), 'Lys-14' (H3K14ac) and 'Lys-18' (H3K18ac) of histone H3, and 'Lys-5' (H4K5ac), 'Lys-12' (H4K12ac) and 'Lys-16' (H4K16ac) of histone H4. Functions in the regulation of gene expression in the whole genome. Acts as a chromatin remodeling regulator to promote the formation of a repressive chromatin state. Functions with MODD via its interaction with TPR3, to down-regulates the histone acetylation level at BZIP46 target genes. BZIP46 is a positive regulator of abscisic acid (ABA) signaling and drought stress tolerance. This is Histone deacetylase 1 from Oryza sativa subsp. japonica (Rice).